The chain runs to 271 residues: GTP cyclohydrolase FolE2 (271 aa).

Belongs to the GTP cyclohydrolase IV family.

It carries out the reaction GTP + H2O = 7,8-dihydroneopterin 3'-triphosphate + formate + H(+). It participates in cofactor biosynthesis; 7,8-dihydroneopterin triphosphate biosynthesis; 7,8-dihydroneopterin triphosphate from GTP: step 1/1. Functionally, converts GTP to 7,8-dihydroneopterin triphosphate. The sequence is that of GTP cyclohydrolase FolE2 from Geotalea uraniireducens (strain Rf4) (Geobacter uraniireducens).